Here is a 222-residue protein sequence, read N- to C-terminus: MIF4G domain-containing protein (222 aa).

The MIF4G domain occupies 3–205 (EASRDEYKIQ…LEIIEFRAAG (203 aa)).

It belongs to the MIF4GD family. In terms of assembly, interacts with EIF4G1, EIF4G2 and SLBP; probably tethered by SLBP to the 3'-end of mRNAs ending with the histone stem-loop, it also interacts with EIF4G1 which is bound to their 5'-end.

The protein localises to the cytoplasm. Its subcellular location is the nucleus. Functions in replication-dependent translation of histone mRNAs which differ from other eukaryotic mRNAs in that they do not end with a poly-A tail but a stem-loop. May participate in circularizing those mRNAs specifically enhancing their translation. This chain is MIF4G domain-containing protein (Mif4gd), found in Rattus norvegicus (Rat).